A 176-amino-acid chain; its full sequence is Salivary antigen 1 (176 aa).

The signal sequence occupies residues 1–18 (MNYCFLVFLVYLVFAVNG).

It is found in the secreted. The chain is Salivary antigen 1 from Ctenocephalides felis (Cat flea).